The sequence spans 376 residues: Lipid-A-disaccharide synthase (376 aa).

It belongs to the LpxB family.

It catalyses the reaction a lipid X + a UDP-2-N,3-O-bis[(3R)-3-hydroxyacyl]-alpha-D-glucosamine = a lipid A disaccharide + UDP + H(+). Its pathway is bacterial outer membrane biogenesis; LPS lipid A biosynthesis. Condensation of UDP-2,3-diacylglucosamine and 2,3-diacylglucosamine-1-phosphate to form lipid A disaccharide, a precursor of lipid A, a phosphorylated glycolipid that anchors the lipopolysaccharide to the outer membrane of the cell. This chain is Lipid-A-disaccharide synthase, found in Coxiella burnetii (strain RSA 331 / Henzerling II).